Here is a 656-residue protein sequence, read N- to C-terminus: Bifunctional protein ThiO/ThiG (656 aa).

A thiO region spans residues 1 to 395 (MQTTSDVLII…HAAENSEGSK (395 aa)). FAD-binding positions include 7–21 (VLIIGGGIIGLAIAV) and 48–50 (AGM). Glu-56 is a binding site for glycine. Residue Val-169 coordinates FAD. Glycine contacts are provided by Arg-298 and Arg-324. 322–328 (HYRNGIL) lines the FAD pocket. The segment at 396-656 (DLLEIAGRKF…ASSPLTGLVG (261 aa)) is thiG. Lys-498 serves as the catalytic Schiff-base intermediate with DXP. 1-deoxy-D-xylulose 5-phosphate contacts are provided by residues Gly-559, 585–586 (AG), and 607–608 (NS).

In the N-terminal section; belongs to the DAO family. ThiO subfamily. This sequence in the C-terminal section; belongs to the ThiG family. Interacts with ThiH and ThiS. FAD is required as a cofactor.

The protein localises to the cytoplasm. It carries out the reaction glycine + O2 + H2O = glyoxylate + H2O2 + NH4(+). It catalyses the reaction [ThiS sulfur-carrier protein]-C-terminal-Gly-aminoethanethioate + 2-iminoacetate + 1-deoxy-D-xylulose 5-phosphate = [ThiS sulfur-carrier protein]-C-terminal Gly-Gly + 2-[(2R,5Z)-2-carboxy-4-methylthiazol-5(2H)-ylidene]ethyl phosphate + 2 H2O + H(+). Its pathway is cofactor biosynthesis; thiamine diphosphate biosynthesis. Its function is as follows. Catalyzes the FAD-dependent oxidative deamination of glycine. Is essential for thiamine biosynthesis since the oxidation of glycine catalyzed by ThiO generates the glycine imine intermediate (dehydroglycine) required for the biosynthesis of the thiazole ring of thiamine pyrophosphate. In terms of biological role, catalyzes the rearrangement of 1-deoxy-D-xylulose 5-phosphate (DXP) to produce the thiazole phosphate moiety of thiamine. Sulfur is provided by the thiocarboxylate moiety of the carrier protein ThiS. In vitro, sulfur can be provided by H(2)S. The protein is Bifunctional protein ThiO/ThiG (thiO/thiG) of Synechocystis sp. (strain ATCC 27184 / PCC 6803 / Kazusa).